The primary structure comprises 196 residues: Dimiconin (196 aa).

A signal peptide spans 1-21; it reads MKTIIVVTIFGILTCAYPTDG. Residues Asn62 and Asn187 are each glycosylated (N-linked (GlcNAc...) asparagine).

The protein belongs to the calycin superfamily. Triabin family. As to expression, salivary gland.

The protein resides in the secreted. Inhibits the intrinsic blood coagulation pathway by blocking the activation of host coagulation factor XII (F12) but not the enzymatic activity of activated F12. The chain is Dimiconin from Triatoma dimidiata (Kissing bug).